The sequence spans 900 residues: Alanine--tRNA ligase (900 aa).

Residues H567, H571, C671, and H675 each contribute to the Zn(2+) site.

Belongs to the class-II aminoacyl-tRNA synthetase family. The cofactor is Zn(2+).

It is found in the cytoplasm. It carries out the reaction tRNA(Ala) + L-alanine + ATP = L-alanyl-tRNA(Ala) + AMP + diphosphate. In terms of biological role, catalyzes the attachment of alanine to tRNA(Ala) in a two-step reaction: alanine is first activated by ATP to form Ala-AMP and then transferred to the acceptor end of tRNA(Ala). Also edits incorrectly charged Ser-tRNA(Ala) and Gly-tRNA(Ala) via its editing domain. This is Alanine--tRNA ligase from Mycoplasma pneumoniae (strain ATCC 29342 / M129 / Subtype 1) (Mycoplasmoides pneumoniae).